Consider the following 474-residue polypeptide: Coronin-1C (474 aa).

WD repeat units follow at residues 25-70 (DDIR…GRID), 78-118 (GHTG…LTLS), 128-168 (GHSK…ALIN), 172-202 (MHSD…RVID), 215-249 (AHEG…ALWN), and 263-303 (DTSN…PYVH). Residues 436-474 (QNEAKLDEILKEIKSIKDTICNQDERISKLEQQMAKIAA) adopt a coiled-coil conformation. N6-acetyllysine is present on Lys446.

The protein belongs to the WD repeat coronin family. Binds F-actin. Interacts with RCC2. Interacts preferentially with nucleotide-free and GDP-bound RAC1. Interacts with VIM (via head domain). Isoform 1 and isoform 2 appear as homotrimers, while isoform 3 seems to exist as monomers. Interacts with MICAL2; this interaction recruits MICAL2 to the actin filaments. As to expression, ubiquitous.

The protein resides in the cell membrane. It is found in the cell projection. Its subcellular location is the lamellipodium. The protein localises to the ruffle membrane. It localises to the cytoplasm. The protein resides in the cytoskeleton. It is found in the cell cortex. Its subcellular location is the endosome membrane. The protein localises to the sarcolemma. It localises to the myofibril. The protein resides in the sarcomere. It is found in the synapse. Functionally, plays a role in directed cell migration by regulating the activation and subcellular location of RAC1. Increases the presence of activated RAC1 at the leading edge of migrating cells. Required for normal organization of the cytoskeleton, including the actin cytoskeleton, microtubules and the vimentin intermediate filaments. Plays a role in endoplasmic reticulum-associated endosome fission: localizes to endosome membrane tubules and promotes recruitment of TMCC1, leading to recruitment of the endoplasmic reticulum to endosome tubules for fission. Endosome membrane fission of early and late endosomes is essential to separate regions destined for lysosomal degradation from carriers to be recycled to the plasma membrane. Required for normal cell proliferation, cell migration, and normal formation of lamellipodia. Required for normal distribution of mitochondria within cells. In terms of biological role, involved in myogenic differentiation. This chain is Coronin-1C, found in Homo sapiens (Human).